The primary structure comprises 273 residues: SUMO-1 cysteine protease S273R (273 aa).

Active-site residues include H168 and N187. Q226 lines the substrate pocket. Catalysis depends on C232, which acts as the Nucleophile.

It belongs to the peptidase C63 family.

It is found in the host cytoplasm. The protein localises to the virion. Functionally, cysteine protease that plays several role during infection including processing of the structural polyprotein or inhibition of the host immune response. Catalyzes the maturation of the pp220 and pp62 polyprotein precursors into core-shell proteins. Plays a role in the disruption of host pyroptosis via specific cleavage of gasdermin D/GSDMD. In addition, strongly decreases the host cGAS-STING signaling by targeting IKBKE via its enzymatic activity. Also impairs host FOXJ1-mediated antiviral effect via degradation of FOXJ1. The sequence is that of SUMO-1 cysteine protease S273R from Ornithodoros (relapsing fever ticks).